Reading from the N-terminus, the 384-residue chain is MGAHASVTDTNILSGLESNATGVTAFSMPGWQLALWATAYLALVLVAVTGNATVIWIILAHERMRTVTNYFIINLALADLCMAAFNATFNFIYASHNIWYFGSTFCYFQNLFPVTAMFVSIYSMTAIAADRYMAIVHPFQPRLSAPSTKAVIAVIWLVALALASPQCFYSTITVDQGATKCVVAWPNDNGGKMLLLYHLVVFVLIYFLPLVVMFAAYSVIGLTLWKRAVPRHQAHGANLRHLQAKKKFVKAMVLVVVTFAICWLPYHLYFILGTFQEDIYYRKFIQQVYLALFWLAMSSTMYNPIIYCCLNHRFRSGFRLAFRCCPWGTPTEEDRLELTHTPSISRRVNRCHTKETLFMTGDMTHSEATNGQVGGPQDGEPAGP.

Over 1 to 32 (MGAHASVTDTNILSGLESNATGVTAFSMPGWQ) the chain is Extracellular. N-linked (GlcNAc...) asparagine glycosylation is present at Asn19. A helical membrane pass occupies residues 33-56 (LALWATAYLALVLVAVTGNATVIW). Topologically, residues 57 to 69 (IILAHERMRTVTN) are cytoplasmic. The helical transmembrane segment at 70–90 (YFIINLALADLCMAAFNATFN) threads the bilayer. Topologically, residues 91 to 107 (FIYASHNIWYFGSTFCY) are extracellular. Cysteines 106 and 181 form a disulfide. Residues 108 to 129 (FQNLFPVTAMFVSIYSMTAIAA) traverse the membrane as a helical segment. At 130–149 (DRYMAIVHPFQPRLSAPSTK) the chain is on the cytoplasmic side. A helical transmembrane segment spans residues 150 to 170 (AVIAVIWLVALALASPQCFYS). The Extracellular segment spans residues 171-196 (TITVDQGATKCVVAWPNDNGGKMLLL). Residues 197–218 (YHLVVFVLIYFLPLVVMFAAYS) form a helical membrane-spanning segment. Over 219 to 251 (VIGLTLWKRAVPRHQAHGANLRHLQAKKKFVKA) the chain is Cytoplasmic. The helical transmembrane segment at 252 to 272 (MVLVVVTFAICWLPYHLYFIL) threads the bilayer. Over 273–290 (GTFQEDIYYRKFIQQVYL) the chain is Extracellular. A helical transmembrane segment spans residues 291–310 (ALFWLAMSSTMYNPIIYCCL). Residues 311 to 384 (NHRFRSGFRL…GPQDGEPAGP (74 aa)) lie on the Cytoplasmic side of the membrane. Cys324 is lipidated: S-palmitoyl cysteine. Residues 365–384 (HSEATNGQVGGPQDGEPAGP) form a disordered region.

It belongs to the G-protein coupled receptor 1 family.

The protein localises to the cell membrane. This is a receptor for the tachykinin neuropeptide substance K (neurokinin A). It is associated with G proteins that activate a phosphatidylinositol-calcium second messenger system. The rank order of affinity of this receptor to tachykinins is: substance K &gt; neuromedin-K &gt; substance P. This Mus musculus (Mouse) protein is Substance-K receptor (Tacr2).